A 671-amino-acid chain; its full sequence is tRNA(Met) cytidine acetyltransferase TmcA (671 aa).

ATP is bound by residues glutamine 180, 202-211 (GRGKSALAGQ), and arginine 319. Residues 349–531 (IRFSAFTQAL…SGCYTAMALL (183 aa)) form the N-acetyltransferase domain. Acetyl-CoA contacts are provided by residues 461 to 463 (IAV), 468 to 474 (QREGIGQ), glutamate 499, and arginine 506.

It belongs to the RNA cytidine acetyltransferase family. TmcA subfamily.

It localises to the cytoplasm. The enzyme catalyses cytidine(34) in elongator tRNA(Met) + acetyl-CoA + ATP + H2O = N(4)-acetylcytidine(34) in elongator tRNA(Met) + ADP + phosphate + CoA + H(+). Functionally, catalyzes the formation of N(4)-acetylcytidine (ac(4)C) at the wobble position of tRNA(Met), by using acetyl-CoA as an acetyl donor and ATP (or GTP). This Citrobacter koseri (strain ATCC BAA-895 / CDC 4225-83 / SGSC4696) protein is tRNA(Met) cytidine acetyltransferase TmcA.